Reading from the N-terminus, the 396-residue chain is Digeranylgeranylglycerophospholipid reductase 2 (396 aa).

Positions 13, 32, 43, 44, 46, 92, 116, 278, 290, and 291 each coordinate FAD.

It belongs to the geranylgeranyl reductase family. DGGGPL reductase subfamily. Requires FAD as cofactor.

The catalysed reaction is a 2,3-bis-O-phytanyl-sn-glycerol 1-phospholipid + 8 A = a 2,3-bis-O-(geranylgeranyl)-sn-glycerol 1-phospholipid + 8 AH2. The enzyme catalyses 2,3-bis-O-(phytanyl)-sn-glycerol 1-phosphate + 8 A = 2,3-bis-O-(geranylgeranyl)-sn-glycerol 1-phosphate + 8 AH2. It carries out the reaction CDP-2,3-bis-O-(geranylgeranyl)-sn-glycerol + 8 AH2 = CDP-2,3-bis-O-(phytanyl)-sn-glycerol + 8 A. It catalyses the reaction archaetidylserine + 8 AH2 = 2,3-bis-O-phytanyl-sn-glycero-3-phospho-L-serine + 8 A. The protein operates within membrane lipid metabolism; glycerophospholipid metabolism. Its function is as follows. Is involved in the reduction of 2,3-digeranylgeranylglycerophospholipids (unsaturated archaeols) into 2,3-diphytanylglycerophospholipids (saturated archaeols) in the biosynthesis of archaeal membrane lipids. Catalyzes the formation of archaetidic acid (2,3-di-O-phytanyl-sn-glyceryl phosphate) from 2,3-di-O-geranylgeranylglyceryl phosphate (DGGGP) via the hydrogenation of each double bond of the isoprenoid chains. Is also probably able to reduce double bonds of geranyl groups in CDP-2,3-bis-O-(geranylgeranyl)-sn-glycerol and archaetidylserine, thus acting at various stages in the biosynthesis of archaeal membrane lipids. The sequence is that of Digeranylgeranylglycerophospholipid reductase 2 from Methanopyrus kandleri (strain AV19 / DSM 6324 / JCM 9639 / NBRC 100938).